Reading from the N-terminus, the 329-residue chain is MVTKAFVLLAIFAEASAKSCAPNKADVILVFCYPKTIITKIPECPYGWEVHQLALGGLCYNGVHEGGYYQFVIPDLSPKNKSYCGTQSEYKPPIYHFYSHIVSNDTTVIVKNQPVNYSFSCTYHSTYLVNQAAFDQRVATVHVKNGSMGTFESQLSLNFYTNAKFSIKKEAPFVLEASEIGSDLFAGVEAKGLSIRFKVVLNSCWATPSADFMYPLQWQLINKGCPTDETVLVHENGRDHRATFQFNAFRFQNIPKLSKVWLHCETFICDSEKLSCPVTCDKRKRLLRDQTGGVLVVELSLRSRGFSSLYSFSDVLHHLIMMLGICAVL.

An N-terminal signal peptide occupies residues 1–17 (MVTKAFVLLAIFAEASA). A ZP domain is found at 19–283 (SCAPNKADVI…LSCPVTCDKR (265 aa)). 4 N-linked (GlcNAc...) asparagine glycosylation sites follow: N80, N104, N116, and N145. The cysteines at positions 204 and 264 are disulfide-linked. The GPI-anchor amidated glycine moiety is linked to residue G305. A propeptide spans 306 to 329 (FSSLYSFSDVLHHLIMMLGICAVL) (removed in mature form).

May form homomeric filament after self-association or heteromeric filament after association with alpha-tectorin. Interacts with CEACAM16. In terms of processing, the presence of a hydrophobic C-terminus preceded by a potential cleavage site strongly suggests that tectorins are synthesized as glycosylphosphatidylinositol-linked, membrane-bound precursors. Tectorins are targeted to the apical surface of the inner ear epithelia by the lipid and proteolytically released into the extracellular compartment.

It localises to the cell membrane. The protein localises to the secreted. The protein resides in the extracellular space. Its subcellular location is the extracellular matrix. In terms of biological role, one of the major non-collagenous components of the tectorial membrane. The tectorial membrane is an extracellular matrix of the inner ear that covers the neuroepithelium of the cochlea and contacts the stereocilia bundles of specialized sensory hair cells. Sound induces movement of these hair cells relative to the tectorial membrane, deflects the stereocilia and leads to fluctuations in hair-cell membrane potential, transducing sound into electrical signals. In Homo sapiens (Human), this protein is Beta-tectorin (TECTB).